The following is a 245-amino-acid chain: Rhamnogalacturonan acetylesterase (245 aa).

Positions 1-17 (MKSIALTSLSLLPSALA) are cleaved as a signal peptide. The Nucleophile role is filled by S26. An intrachain disulfide couples C100 to C108. Residues D204 and H207 contribute to the active site. An intrachain disulfide couples C226 to C244.

It belongs to the 'GDSL' lipolytic enzyme family.

It localises to the secreted. The catalysed reaction is Hydrolytic cleavage of 2-O-acetyl- or 3-O-acetyl groups of alpha-D-galacturonic acid in rhamnogalacturonan I.. In terms of biological role, plays a key role in the degradation of rhamnogalacturonan in the cell wall. Involved in degradation of pectin. This chain is Rhamnogalacturonan acetylesterase, found in Emericella nidulans (strain FGSC A4 / ATCC 38163 / CBS 112.46 / NRRL 194 / M139) (Aspergillus nidulans).